Consider the following 349-residue polypeptide: Isopentenyl-diphosphate delta-isomerase (349 aa).

Residue Arg12–Lys13 participates in substrate binding. Residues Ser69, Ser70–Thr72, Ser101, and Asn129 contribute to the FMN site. Ser101–Arg103 is a binding site for substrate. Gln164 provides a ligand contact to substrate. Residue Glu165 participates in Mg(2+) binding. Residues Lys196, Thr226, Gly279 to Arg281, and Ala300 to Ala301 each bind FMN.

This sequence belongs to the IPP isomerase type 2 family. In terms of assembly, homooctamer. Dimer of tetramers. The cofactor is FMN. Requires NADPH as cofactor. It depends on Mg(2+) as a cofactor.

The protein resides in the cytoplasm. It carries out the reaction isopentenyl diphosphate = dimethylallyl diphosphate. Involved in the biosynthesis of isoprenoids. Catalyzes the 1,3-allylic rearrangement of the homoallylic substrate isopentenyl (IPP) to its allylic isomer, dimethylallyl diphosphate (DMAPP). This Paracoccus zeaxanthinifaciens protein is Isopentenyl-diphosphate delta-isomerase.